We begin with the raw amino-acid sequence, 109 residues long: UPF0060 membrane protein RHA1_ro06609 (109 aa).

A run of 4 helical transmembrane segments spans residues 7–27, 33–53, 62–82, and 88–108; these read VALFAVAALFEIGGAWLVWQG, GWIWIGAGVAALGAYGFVATL, ILAAYGGVFVAGSLIWGMVAD, and RWDVSGALICLLGMAVIMYAP.

Belongs to the UPF0060 family.

It is found in the cell membrane. This is UPF0060 membrane protein RHA1_ro06609 from Rhodococcus jostii (strain RHA1).